Consider the following 260-residue polypeptide: HMP-PP phosphatase (260 aa).

D8 functions as the Nucleophile in the catalytic mechanism. Mg(2+) is bound by residues D8, D10, and D212.

Belongs to the HAD-like hydrolase superfamily. Cof family. Mg(2+) is required as a cofactor.

The enzyme catalyses 4-amino-2-methyl-5-(diphosphooxymethyl)pyrimidine + H2O = 4-amino-2-methyl-5-(phosphooxymethyl)pyrimidine + phosphate + H(+). Functionally, catalyzes the hydrolysis of 4-amino-2-methyl-5-hydroxymethylpyrimidine pyrophosphate (HMP-PP) to 4-amino-2-methyl-5-hydroxymethylpyrimidine phosphate (HMP-P). This is HMP-PP phosphatase from Shigella boydii serotype 4 (strain Sb227).